An 89-amino-acid polypeptide reads, in one-letter code: GTP cyclohydrolase 1 feedback regulatory protein (89 aa).

The protein belongs to the GFRP family. Homopentamer. Forms a complex with GCH1 where a GCH1 homodecamer is sandwiched by two GFRP homopentamers.

The protein resides in the nucleus. It is found in the nucleus membrane. The protein localises to the cytoplasm. It localises to the cytosol. Its function is as follows. Mediates tetrahydrobiopterin inhibition of GTP cyclohydrolase 1. The sequence is that of GTP cyclohydrolase 1 feedback regulatory protein (gchfr) from Danio rerio (Zebrafish).